The sequence spans 483 residues: Rhamnulokinase (483 aa).

Residue 11 to 15 (ASSGR) coordinates ATP. Substrate-binding positions include G79 and 234 to 236 (HDT). D235 serves as the catalytic Proton acceptor. Residue T257 coordinates ATP. N294 is a substrate binding site. Q302 contributes to the ATP binding site. The cysteines at positions 352 and 369 are disulfide-linked. ATP is bound at residue G401.

It belongs to the rhamnulokinase family. The cofactor is Mg(2+).

The enzyme catalyses L-rhamnulose + ATP = L-rhamnulose 1-phosphate + ADP + H(+). The protein operates within carbohydrate degradation; L-rhamnose degradation; glycerone phosphate from L-rhamnose: step 2/3. Functionally, involved in the catabolism of L-rhamnose (6-deoxy-L-mannose). Catalyzes the transfer of the gamma-phosphate group from ATP to the 1-hydroxyl group of L-rhamnulose to yield L-rhamnulose 1-phosphate. The sequence is that of Rhamnulokinase from Listeria monocytogenes serotype 4b (strain CLIP80459).